The chain runs to 214 residues: Urease accessory protein UreG (214 aa).

GTP is bound at residue 23–30 (GPVGSGKT).

Belongs to the SIMIBI class G3E GTPase family. UreG subfamily. Homodimer. UreD, UreF and UreG form a complex that acts as a GTP-hydrolysis-dependent molecular chaperone, activating the urease apoprotein by helping to assemble the nickel containing metallocenter of UreC. The UreE protein probably delivers the nickel.

It is found in the cytoplasm. Its function is as follows. Facilitates the functional incorporation of the urease nickel metallocenter. This process requires GTP hydrolysis, probably effectuated by UreG. The chain is Urease accessory protein UreG from Bordetella pertussis (strain Tohama I / ATCC BAA-589 / NCTC 13251).